The following is a 292-amino-acid chain: Histamine N-methyltransferase (292 aa).

Residue E28 coordinates substrate. Positions 60, 89, 94, 120, and 142 each coordinate S-adenosyl-L-methionine. N283 lines the substrate pocket.

This sequence belongs to the class I-like SAM-binding methyltransferase superfamily. HNMT family. Monomer.

It localises to the cytoplasm. It catalyses the reaction histamine + S-adenosyl-L-methionine = N(tau)-methylhistamine + S-adenosyl-L-homocysteine + H(+). In terms of biological role, inactivates histamine by N-methylation. Plays an important role in degrading histamine and in regulating the airway response to histamine. This chain is Histamine N-methyltransferase (HNMT), found in Bos taurus (Bovine).